An 88-amino-acid polypeptide reads, in one-letter code: DNA-directed RNA polymerase subunit omega (88 aa).

This sequence belongs to the RNA polymerase subunit omega family. As to quaternary structure, the RNAP catalytic core consists of 2 alpha, 1 beta, 1 beta' and 1 omega subunit. When a sigma factor is associated with the core the holoenzyme is formed, which can initiate transcription.

The catalysed reaction is RNA(n) + a ribonucleoside 5'-triphosphate = RNA(n+1) + diphosphate. Promotes RNA polymerase assembly. Latches the N- and C-terminal regions of the beta' subunit thereby facilitating its interaction with the beta and alpha subunits. The sequence is that of DNA-directed RNA polymerase subunit omega from Thermobifida fusca (strain YX).